The chain runs to 440 residues: Amino acid transporter AVT6D (440 aa).

A run of 11 helical transmembrane segments spans residues 26 to 46 (FAGA…MAIP), 47 to 67 (AAFK…IAWL), 102 to 122 (AVTV…SIII), 149 to 169 (WNTR…PLVL), 182 to 202 (ISFL…IIAL), 219 to 239 (GGLS…AFTF), 262 to 282 (ISVI…YLLF), 309 to 329 (IVRL…NFSL), 356 to 376 (FPLL…WYFF), 377 to 397 (QFLG…AIVL), and 410 to 430 (IVAS…ISTN).

It belongs to the amino acid/polyamine transporter 2 family. Amino acid/auxin permease (AAAP) (TC 2.A.18.6) subfamily.

The protein resides in the membrane. This chain is Amino acid transporter AVT6D, found in Arabidopsis thaliana (Mouse-ear cress).